We begin with the raw amino-acid sequence, 269 residues long: Diaminopimelate epimerase (269 aa).

2 residues coordinate substrate: N20 and N63. The Proton donor role is filled by C72. Residues 73-74 (GN), N179, and 197-198 (ER) each bind substrate. The Proton acceptor role is filled by C207. 208–209 (GT) lines the substrate pocket.

This sequence belongs to the diaminopimelate epimerase family. In terms of assembly, homodimer.

The protein localises to the cytoplasm. The enzyme catalyses (2S,6S)-2,6-diaminopimelate = meso-2,6-diaminopimelate. The protein operates within amino-acid biosynthesis; L-lysine biosynthesis via DAP pathway; DL-2,6-diaminopimelate from LL-2,6-diaminopimelate: step 1/1. Functionally, catalyzes the stereoinversion of LL-2,6-diaminopimelate (L,L-DAP) to meso-diaminopimelate (meso-DAP), a precursor of L-lysine and an essential component of the bacterial peptidoglycan. This is Diaminopimelate epimerase from Chlamydia muridarum (strain MoPn / Nigg).